A 719-amino-acid polypeptide reads, in one-letter code: Plasmin and fibronectin-binding protein A (719 aa).

Residues 1 to 45 form the signal peptide; that stretch reads MLKIVKKLEVLMKYFVPNEVFSIRKLKVGTCSVLLAISILGSQGI. Disordered regions lie at residues 56-76 and 109-128; these read PMATKESSNAITNDLDNSPTV and IRSNSQLDNRTVESTVTSTN. 5 PbH1 repeats span residues 287 to 310, 362 to 384, 397 to 419, 497 to 523, and 525 to 546; these read SNNVTIKNVTFKDSYQGHAIQIAG, SENVTIQNSYFGKSDKSGELVTA, PSNIKILNNHFDNMMYAGVRFTG, VSDITVTKNVINNNSKETEQPNIELLR, and SDNLVVSENSIFGGKEGIVIED. A coiled-coil region spans residues 601 to 658; the sequence is NNLSDKNEKEKNKEEKQSNSNNVIDSNQKNGEFNSSKDNRQMNDKIDNKQDNKTEEVN. A compositionally biased stretch (basic and acidic residues) spans 606-617; that stretch reads KNEKEKNKEEKQ. Positions 606–655 are disordered; that stretch reads KNEKEKNKEEKQSNSNNVIDSNQKNGEFNSSKDNRQMNDKIDNKQDNKTE. Residues 623–634 are compositionally biased toward polar residues; that stretch reads VIDSNQKNGEFN. The span at 635–655 shows a compositional bias: basic and acidic residues; the sequence is SSKDNRQMNDKIDNKQDNKTE. The LPXTG sorting signal motif lies at 685-689; sequence LPKTG. T688 carries the post-translational modification Pentaglycyl murein peptidoglycan amidated threonine. Positions 689-719 are cleaved as a propeptide — removed by sortase; the sequence is GSNKIMELFLTVTGIGLLLTLKGLKYYGKDK.

Its subcellular location is the secreted. The protein localises to the cell wall. Its function is as follows. Acts as a fibronectin-dependent adhesin and invasin. Binds host (in this case human) fibronectin, plasmin, plasminogen, and human serum albumin. Where the bacteria adhere to human cells there is major recruitment of microvilli which seem to fuse to cover the streptococcal chains. Antibodies to this protein reduce bacterial growth in human blood. This Streptococcus pneumoniae (strain ATCC BAA-255 / R6) protein is Plasmin and fibronectin-binding protein A (pfbA).